Consider the following 455-residue polypeptide: Yop proteins translocation protein P (455 aa).

Disordered stretches follow at residues 38-82 (NKGN…QPGR) and 430-455 (DFQASDDSEQESRQKRHVYEEWEAEE). Composition is skewed to basic and acidic residues over residues 43–69 (HPKEESLKPVRPHDLGKKEGQKGDGLR) and 439–449 (QESRQKRHVYE).

Belongs to the SpaN family.

Its subcellular location is the cytoplasm. Its function is as follows. Component of the yop secretion machinery. The chain is Yop proteins translocation protein P (yscP) from Yersinia pseudotuberculosis serotype I (strain IP32953).